A 489-amino-acid polypeptide reads, in one-letter code: Cobyric acid synthase (489 aa).

Positions 252 to 441 constitute a GATase cobBQ-type domain; it reads ALTIGVIQLP…IHGIFANTEF (190 aa). The active-site Nucleophile is the Cys330. The active site involves His433.

Belongs to the CobB/CobQ family. CobQ subfamily.

The protein operates within cofactor biosynthesis; adenosylcobalamin biosynthesis. In terms of biological role, catalyzes amidations at positions B, D, E, and G on adenosylcobyrinic A,C-diamide. NH(2) groups are provided by glutamine, and one molecule of ATP is hydrogenolyzed for each amidation. The polypeptide is Cobyric acid synthase (Herpetosiphon aurantiacus (strain ATCC 23779 / DSM 785 / 114-95)).